The primary structure comprises 124 residues: Glycine cleavage system H protein (124 aa).

In terms of domain architecture, Lipoyl-binding spans 22-103 (VFVVGITDNA…AYTAWIFKIK (82 aa)). K63 carries the post-translational modification N6-lipoyllysine.

Belongs to the GcvH family. The glycine cleavage system is composed of four proteins: P, T, L and H. Requires (R)-lipoate as cofactor.

The glycine cleavage system catalyzes the degradation of glycine. The H protein shuttles the methylamine group of glycine from the P protein to the T protein. The chain is Glycine cleavage system H protein from Bordetella pertussis (strain Tohama I / ATCC BAA-589 / NCTC 13251).